The primary structure comprises 256 residues: Hemin import ATP-binding protein HmuV (256 aa).

The region spanning 2–239 (IHAFAVSVIR…ANVREVYQVD (238 aa)) is the ABC transporter domain. Residue 34-41 (GPNGAGKS) coordinates ATP.

It belongs to the ABC transporter superfamily. Heme (hemin) importer (TC 3.A.1.14.5) family. The complex is composed of two ATP-binding proteins (HmuV), two transmembrane proteins (HmuU) and a solute-binding protein (HmuT).

It is found in the cell inner membrane. Its function is as follows. Part of the ABC transporter complex HmuTUV involved in hemin import. Responsible for energy coupling to the transport system. This chain is Hemin import ATP-binding protein HmuV, found in Hahella chejuensis (strain KCTC 2396).